Reading from the N-terminus, the 132-residue chain is Small ribosomal subunit protein uS8 (132 aa).

The protein belongs to the universal ribosomal protein uS8 family. As to quaternary structure, part of the 30S ribosomal subunit. Contacts proteins S5 and S12.

Functionally, one of the primary rRNA binding proteins, it binds directly to 16S rRNA central domain where it helps coordinate assembly of the platform of the 30S subunit. The protein is Small ribosomal subunit protein uS8 of Syntrophobacter fumaroxidans (strain DSM 10017 / MPOB).